The following is a 405-amino-acid chain: MAFKTLDDLLAEGVSGRHVLVRSDFNVPLDDEGNITDSGRITASLPTIKALIEGGAKVILSAHLGRPKGEVNPKYSLAPVAEALSEALDQYVALAGDVSGEDAHERANGLNDGDVLLLENVRFDPRETSKDEAERGTFADELVALAADNGAFVSDGFGVVHRAQASVYDVAKRLPAYAGKLVQKEVETLAAVAEKPEHPYVVVLGGAKVSDKLGVIEALAGKADKVIIGGGMCYTLLAAQGYNVQDSLLQEDQIDNCKELLERFGDKIVLPVDLVAATEFDAQAENKVVALDGIPEGWQSLDIGPESVKKFDEVIASSKTVFWNGPMGVFEMEAFSKGTAGVAQSIIDATAKNGSFTVVGGGDSAASVRLLGLDEEGFSHISTGGGASLEFLEGKELPGVKVLEA.

Residues 24 to 26 (DFN), Arg40, 63 to 66 (HLGR), Arg122, and Arg162 each bind substrate. ATP is bound by residues Lys212, Glu331, and 361-364 (GGDS).

It belongs to the phosphoglycerate kinase family. In terms of assembly, monomer.

It is found in the cytoplasm. It carries out the reaction (2R)-3-phosphoglycerate + ATP = (2R)-3-phospho-glyceroyl phosphate + ADP. It participates in carbohydrate degradation; glycolysis; pyruvate from D-glyceraldehyde 3-phosphate: step 2/5. This is Phosphoglycerate kinase from Corynebacterium aurimucosum (strain ATCC 700975 / DSM 44827 / CIP 107346 / CN-1) (Corynebacterium nigricans).